Consider the following 257-residue polypeptide: NAD-capped RNA hydrolase NudC (257 aa).

R69 is a substrate binding site. 2 residues coordinate Zn(2+): C98 and C101. E111 contacts substrate. C116 and C119 together coordinate Zn(2+). Residue Y124 coordinates substrate. In terms of domain architecture, Nudix hydrolase spans 125 to 248 (PQIAPCIIVA…TVARRLIEDT (124 aa)). Residues A158, E174, and E178 each coordinate a divalent metal cation. The Nudix box signature appears at 159–180 (GFVEVGETLEQAVAREVMEESG). Substrate is bound at residue 192–199 (QPWPFPQS). Position 219 (E219) interacts with a divalent metal cation. A substrate-binding site is contributed by A241.

Belongs to the Nudix hydrolase family. NudC subfamily. In terms of assembly, homodimer. The cofactor is Mg(2+). Requires Mn(2+) as cofactor. Zn(2+) is required as a cofactor.

The enzyme catalyses a 5'-end NAD(+)-phospho-ribonucleoside in mRNA + H2O = a 5'-end phospho-adenosine-phospho-ribonucleoside in mRNA + beta-nicotinamide D-ribonucleotide + 2 H(+). The catalysed reaction is NAD(+) + H2O = beta-nicotinamide D-ribonucleotide + AMP + 2 H(+). It carries out the reaction NADH + H2O = reduced beta-nicotinamide D-ribonucleotide + AMP + 2 H(+). MRNA decapping enzyme that specifically removes the nicotinamide adenine dinucleotide (NAD) cap from a subset of mRNAs by hydrolyzing the diphosphate linkage to produce nicotinamide mononucleotide (NMN) and 5' monophosphate mRNA. The NAD-cap is present at the 5'-end of some mRNAs and stabilizes RNA against 5'-processing. Has preference for mRNAs with a 5'-end purine. Catalyzes the hydrolysis of a broad range of dinucleotide pyrophosphates. The chain is NAD-capped RNA hydrolase NudC from Salmonella typhi.